Here is a 244-residue protein sequence, read N- to C-terminus: 1-(5-phosphoribosyl)-5-[(5-phosphoribosylamino)methylideneamino] imidazole-4-carboxamide isomerase (244 aa).

Catalysis depends on aspartate 8, which acts as the Proton acceptor. Catalysis depends on aspartate 129, which acts as the Proton donor.

The protein belongs to the HisA/HisF family.

It is found in the cytoplasm. The catalysed reaction is 1-(5-phospho-beta-D-ribosyl)-5-[(5-phospho-beta-D-ribosylamino)methylideneamino]imidazole-4-carboxamide = 5-[(5-phospho-1-deoxy-D-ribulos-1-ylimino)methylamino]-1-(5-phospho-beta-D-ribosyl)imidazole-4-carboxamide. The protein operates within amino-acid biosynthesis; L-histidine biosynthesis; L-histidine from 5-phospho-alpha-D-ribose 1-diphosphate: step 4/9. The chain is 1-(5-phosphoribosyl)-5-[(5-phosphoribosylamino)methylideneamino] imidazole-4-carboxamide isomerase from Geobacter sulfurreducens (strain ATCC 51573 / DSM 12127 / PCA).